We begin with the raw amino-acid sequence, 409 residues long: Type II methyltransferase M.BsuFI (409 aa).

The SAM-dependent MTase C5-type domain maps to Leu101–Ala402. The active site involves Cys170.

This sequence belongs to the class I-like SAM-binding methyltransferase superfamily. C5-methyltransferase family.

The enzyme catalyses a 2'-deoxycytidine in DNA + S-adenosyl-L-methionine = a 5-methyl-2'-deoxycytidine in DNA + S-adenosyl-L-homocysteine + H(+). Its function is as follows. A methylase, recognizes the double-stranded sequence 5'-CCGG-3', methylates C-1 on both strands, and protects the DNA from cleavage by the BsuFI endonuclease. The chain is Type II methyltransferase M.BsuFI (hsdFM) from Bacillus subtilis.